The sequence spans 202 residues: Pyrrolidone-carboxylate peptidase (202 aa).

Residues Glu-78, Cys-141, and His-165 contribute to the active site.

It belongs to the peptidase C15 family. In terms of assembly, homotetramer.

The protein resides in the cytoplasm. The enzyme catalyses Release of an N-terminal pyroglutamyl group from a polypeptide, the second amino acid generally not being Pro.. Its function is as follows. Removes 5-oxoproline from various penultimate amino acid residues except L-proline. The polypeptide is Pyrrolidone-carboxylate peptidase (Thermosipho melanesiensis (strain DSM 12029 / CIP 104789 / BI429)).